Consider the following 315-residue polypeptide: Olfactory receptor 2V1 (315 aa).

A run of 7 helical transmembrane segments spans residues 31–51 (TVML…LLIY), 59–79 (PMYF…CNIV), 100–120 (IQIG…GLMA), 145–165 (IAGS…VAAM), 196–216 (FDTL…SIIV), 239–259 (LATC…AMFI), and 273–293 (KVVS…IYSL). Cysteines 98 and 180 form a disulfide.

This sequence belongs to the G-protein coupled receptor 1 family.

The protein localises to the cell membrane. In terms of biological role, odorant receptor. Activated by (+) and (-)-limonene. The polypeptide is Olfactory receptor 2V1 (Mus musculus (Mouse)).